A 1336-amino-acid polypeptide reads, in one-letter code: DNA-directed RNA polymerase subunit beta' (1336 aa).

The Zn(2+) site is built by cysteine 60, cysteine 62, cysteine 75, and cysteine 78. Aspartate 535, aspartate 537, and aspartate 539 together coordinate Mg(2+). Residues cysteine 902, cysteine 984, cysteine 991, and cysteine 994 each coordinate Zn(2+).

It belongs to the RNA polymerase beta' chain family. The RNAP catalytic core consists of 2 alpha, 1 beta, 1 beta' and 1 omega subunit. When a sigma factor is associated with the core the holoenzyme is formed, which can initiate transcription. Mg(2+) is required as a cofactor. Zn(2+) serves as cofactor.

The enzyme catalyses RNA(n) + a ribonucleoside 5'-triphosphate = RNA(n+1) + diphosphate. Functionally, DNA-dependent RNA polymerase catalyzes the transcription of DNA into RNA using the four ribonucleoside triphosphates as substrates. The polypeptide is DNA-directed RNA polymerase subunit beta' (Corynebacterium diphtheriae (strain ATCC 700971 / NCTC 13129 / Biotype gravis)).